Here is a 482-residue protein sequence, read N- to C-terminus: Glutamate--tRNA ligase 1 (482 aa).

The 'HIGH' region signature appears at 18–28 (PSPTGYLHLGG). A 'KMSKS' region motif is present at residues 252–256 (KLSKR). An ATP-binding site is contributed by Lys255.

This sequence belongs to the class-I aminoacyl-tRNA synthetase family. Glutamate--tRNA ligase type 1 subfamily. In terms of assembly, monomer.

It is found in the cytoplasm. The enzyme catalyses tRNA(Glu) + L-glutamate + ATP = L-glutamyl-tRNA(Glu) + AMP + diphosphate. Functionally, catalyzes the attachment of glutamate to tRNA(Glu) in a two-step reaction: glutamate is first activated by ATP to form Glu-AMP and then transferred to the acceptor end of tRNA(Glu). The chain is Glutamate--tRNA ligase 1 from Erythrobacter litoralis (strain HTCC2594).